Reading from the N-terminus, the 390-residue chain is Sorting nexin C1711.11 (390 aa).

The PX domain maps to 1 to 123 (MLKCTIKNEQ…QFLENNSWKS (123 aa)). Positions 44, 70, and 89 each coordinate a 1,2-diacyl-sn-glycero-3-phospho-(1D-myo-inositol-3-phosphate).

Belongs to the sorting nexin family.

Its subcellular location is the cytoplasm. It localises to the membrane. This chain is Sorting nexin C1711.11, found in Schizosaccharomyces pombe (strain 972 / ATCC 24843) (Fission yeast).